Reading from the N-terminus, the 223-residue chain is 7-cyano-7-deazaguanine synthase (223 aa).

12–22 (FSGGQDSTTCL) is a binding site for ATP. 4 residues coordinate Zn(2+): cysteine 189, cysteine 198, cysteine 201, and cysteine 204.

The protein belongs to the QueC family. Homodimer. Zn(2+) is required as a cofactor.

The enzyme catalyses 7-carboxy-7-deazaguanine + NH4(+) + ATP = 7-cyano-7-deazaguanine + ADP + phosphate + H2O + H(+). Its pathway is purine metabolism; 7-cyano-7-deazaguanine biosynthesis. Its function is as follows. Catalyzes the ATP-dependent conversion of 7-carboxy-7-deazaguanine (CDG) to 7-cyano-7-deazaguanine (preQ(0)). In Halalkalibacterium halodurans (strain ATCC BAA-125 / DSM 18197 / FERM 7344 / JCM 9153 / C-125) (Bacillus halodurans), this protein is 7-cyano-7-deazaguanine synthase.